A 316-amino-acid polypeptide reads, in one-letter code: tRNA dimethylallyltransferase (316 aa).

ATP is bound at residue Gly17–Thr24. A substrate-binding site is contributed by Thr19–Thr24. Interaction with substrate tRNA stretches follow at residues Asp42–Leu45, Gln166–Arg170, and Arg247–Arg252.

The protein belongs to the IPP transferase family. As to quaternary structure, monomer. The cofactor is Mg(2+).

The catalysed reaction is adenosine(37) in tRNA + dimethylallyl diphosphate = N(6)-dimethylallyladenosine(37) in tRNA + diphosphate. Its function is as follows. Catalyzes the transfer of a dimethylallyl group onto the adenine at position 37 in tRNAs that read codons beginning with uridine, leading to the formation of N6-(dimethylallyl)adenosine (i(6)A). This is tRNA dimethylallyltransferase from Salmonella schwarzengrund (strain CVM19633).